A 392-amino-acid polypeptide reads, in one-letter code: Stilbene synthase 3 (392 aa).

55-58 (KFNR) lines the substrate pocket. C164 is an active-site residue. Residues L267 and 305-307 (GGP) contribute to the substrate site.

Belongs to the thiolase-like superfamily. Chalcone/stilbene synthases family. In terms of assembly, homodimer.

Its subcellular location is the cytoplasm. The catalysed reaction is 4-coumaroyl-CoA + 3 malonyl-CoA + 3 H(+) = trans-resveratrol + 4 CO2 + 4 CoA. It functions in the pathway phytoalexin biosynthesis; 3,4',5-trihydroxystilbene biosynthesis; 3,4',5-trihydroxystilbene from trans-4-coumarate: step 2/2. Mediates resistance to pathogens which are sensitive to stilbenes. The polypeptide is Stilbene synthase 3 (Vitis vinifera (Grape)).